Consider the following 297-residue polypeptide: Beta-1,3-galactosyltransferase 5 (297 aa).

Topologically, residues 1–7 (MAFPKMR) are cytoplasmic. A helical; Signal-anchor for type II membrane protein membrane pass occupies residues 8–28 (LMYVCLLVLGALCVYFSMYSL). Topologically, residues 29–297 (NLFKEQSFVY…KPRTLLDYWQ (269 aa)) are lumenal. N-linked (GlcNAc...) asparagine glycosylation is found at N130, N174, and N231.

The protein belongs to the glycosyltransferase 31 family.

It is found in the golgi apparatus membrane. It catalyses the reaction a globoside Gb4Cer (d18:1(4E)) + UDP-alpha-D-galactose = a globoside GalGb4Cer (d18:1(4E)) + UDP + H(+). Its pathway is protein modification; protein glycosylation. In terms of biological role, catalyzes the transfer of Gal to GlcNAc-based acceptors with a preference for the core3 O-linked glycan GlcNAc(beta1,3)GalNAc structure. Can use glycolipid LC3Cer as an efficient acceptor. The protein is Beta-1,3-galactosyltransferase 5 (B3GALT5) of Pan troglodytes (Chimpanzee).